The following is a 162-amino-acid chain: Small ribosomal subunit protein uS7m (162 aa).

Belongs to the universal ribosomal protein uS7 family. In terms of assembly, part of the small ribosomal subunit.

Its subcellular location is the mitochondrion. One of the primary rRNA binding proteins, it binds directly to 16S-like rRNA where it nucleates assembly of the head domain of the small subunit. The polypeptide is Small ribosomal subunit protein uS7m (mrps7) (Dictyostelium citrinum (Slime mold)).